The following is a 439-amino-acid chain: Ribosomal protein uS12 methylthiotransferase RimO (439 aa).

The 113-residue stretch at 5-117 (KKLHLISLGC…IDELIASKQS (113 aa)) folds into the MTTase N-terminal domain. C14, C48, C80, C149, C153, and C156 together coordinate [4Fe-4S] cluster. The region spanning 135–363 (TGSNYHAYIK…GEIAERSTLR (229 aa)) is the Radical SAM core domain. One can recognise a TRAM domain in the interval 366–437 (EKMVGKTVEL…GMQLLATLIK (72 aa)).

Belongs to the methylthiotransferase family. RimO subfamily. [4Fe-4S] cluster is required as a cofactor.

Its subcellular location is the cytoplasm. It catalyses the reaction L-aspartate(89)-[ribosomal protein uS12]-hydrogen + (sulfur carrier)-SH + AH2 + 2 S-adenosyl-L-methionine = 3-methylsulfanyl-L-aspartate(89)-[ribosomal protein uS12]-hydrogen + (sulfur carrier)-H + 5'-deoxyadenosine + L-methionine + A + S-adenosyl-L-homocysteine + 2 H(+). Catalyzes the methylthiolation of an aspartic acid residue of ribosomal protein uS12. In Sulfurovum sp. (strain NBC37-1), this protein is Ribosomal protein uS12 methylthiotransferase RimO.